The following is a 270-amino-acid chain: Fluoride-specific ion channel FluC 1 (270 aa).

The next 4 membrane-spanning stretches (helical) occupy residues isoleucine 4 to leucine 24, leucine 35 to tyrosine 55, isoleucine 67 to valine 87, and alanine 96 to leucine 116. 2 residues coordinate Na(+): glycine 74 and serine 77.

The protein belongs to the fluoride channel Fluc/FEX (TC 1.A.43) family.

The protein resides in the cell inner membrane. It carries out the reaction fluoride(in) = fluoride(out). With respect to regulation, na(+) is not transported, but it plays an essential structural role and its presence is essential for fluoride channel function. Functionally, fluoride-specific ion channel. Important for reducing fluoride concentration in the cell, thus reducing its toxicity. This Brucella abortus biovar 1 (strain 9-941) protein is Fluoride-specific ion channel FluC 1.